Consider the following 180-residue polypeptide: GTP cyclohydrolase 1 (180 aa).

Zn(2+) contacts are provided by cysteine 71, histidine 74, and cysteine 142.

Belongs to the GTP cyclohydrolase I family. In terms of assembly, toroid-shaped homodecamer, composed of two pentamers of five dimers.

The enzyme catalyses GTP + H2O = 7,8-dihydroneopterin 3'-triphosphate + formate + H(+). The protein operates within cofactor biosynthesis; 7,8-dihydroneopterin triphosphate biosynthesis; 7,8-dihydroneopterin triphosphate from GTP: step 1/1. This is GTP cyclohydrolase 1 from Helicobacter acinonychis (strain Sheeba).